The following is a 93-amino-acid chain: Small ribosomal subunit protein bS16 (93 aa).

This sequence belongs to the bacterial ribosomal protein bS16 family.

This is Small ribosomal subunit protein bS16 from Dictyoglomus thermophilum (strain ATCC 35947 / DSM 3960 / H-6-12).